The chain runs to 420 residues: Serine hydroxymethyltransferase (420 aa).

(6S)-5,6,7,8-tetrahydrofolate is bound by residues leucine 121 and 125 to 127 (GHL). Lysine 230 is subject to N6-(pyridoxal phosphate)lysine. (6S)-5,6,7,8-tetrahydrofolate-binding positions include glutamate 246 and 354–356 (SPF).

The protein belongs to the SHMT family. As to quaternary structure, homodimer. The cofactor is pyridoxal 5'-phosphate.

The protein localises to the cytoplasm. It catalyses the reaction (6R)-5,10-methylene-5,6,7,8-tetrahydrofolate + glycine + H2O = (6S)-5,6,7,8-tetrahydrofolate + L-serine. It functions in the pathway one-carbon metabolism; tetrahydrofolate interconversion. The protein operates within amino-acid biosynthesis; glycine biosynthesis; glycine from L-serine: step 1/1. Catalyzes the reversible interconversion of serine and glycine with tetrahydrofolate (THF) serving as the one-carbon carrier. This reaction serves as the major source of one-carbon groups required for the biosynthesis of purines, thymidylate, methionine, and other important biomolecules. Also exhibits THF-independent aldolase activity toward beta-hydroxyamino acids, producing glycine and aldehydes, via a retro-aldol mechanism. This chain is Serine hydroxymethyltransferase, found in Rickettsia typhi (strain ATCC VR-144 / Wilmington).